A 718-amino-acid chain; its full sequence is Polyribonucleotide nucleotidyltransferase (718 aa).

The Mg(2+) site is built by aspartate 496 and aspartate 502. In terms of domain architecture, KH spans 563-622; that stretch reads PRLLTIKIDPDMIGLVIGPGGKTIKGITEETGAKIDIEDDGTVTISAVDENKAKRARNIV. The S1 motif domain maps to 632–700; the sequence is GDVYAGRVTR…NKGRINLTRL (69 aa).

As to quaternary structure, may form homodimers or higher order multimers. Interacts with RNase E (rne). The cofactor is Mg(2+).

The protein resides in the cytoplasm. The enzyme catalyses RNA(n+1) + phosphate = RNA(n) + a ribonucleoside 5'-diphosphate. Involved in mRNA degradation. Catalyzes the phosphorolysis of single-stranded polyribonucleotides processively in the 3'- to 5'-direction. The chain is Polyribonucleotide nucleotidyltransferase from Nostoc sp. (strain PCC 7120 / SAG 25.82 / UTEX 2576).